A 279-amino-acid chain; its full sequence is Putative expansin-A26 (279 aa).

An N-terminal signal peptide occupies residues 1–27; the sequence is MKLLEKMIYVEFLMIIMAMWVVPMSYG. An Expansin-like EG45 domain is found at 76–186; it reads QGACGYGNLF…RRIPCSKTGG (111 aa). Residues 196–275 form the Expansin-like CBD domain; the sequence is YFLMVLIYNV…NWGFGQTFDG (80 aa).

Belongs to the expansin family. Expansin A subfamily.

It is found in the secreted. The protein localises to the cell wall. The protein resides in the membrane. Causes loosening and extension of plant cell walls by disrupting non-covalent bonding between cellulose microfibrils and matrix glucans. No enzymatic activity has been found. This chain is Putative expansin-A26 (EXPA26), found in Arabidopsis thaliana (Mouse-ear cress).